We begin with the raw amino-acid sequence, 162 residues long: Cyclic pyranopterin monophosphate synthase (162 aa).

Substrate is bound by residues Leu75 to His77 and Met113 to Glu114. Asp128 is an active-site residue.

The protein belongs to the MoaC family. Homohexamer; trimer of dimers.

It carries out the reaction (8S)-3',8-cyclo-7,8-dihydroguanosine 5'-triphosphate = cyclic pyranopterin phosphate + diphosphate. Its pathway is cofactor biosynthesis; molybdopterin biosynthesis. In terms of biological role, catalyzes the conversion of (8S)-3',8-cyclo-7,8-dihydroguanosine 5'-triphosphate to cyclic pyranopterin monophosphate (cPMP). The polypeptide is Cyclic pyranopterin monophosphate synthase (Burkholderia cenocepacia (strain HI2424)).